The sequence spans 387 residues: Putative glutamate--cysteine ligase 2 (387 aa).

This sequence belongs to the glutamate--cysteine ligase type 2 family. YbdK subfamily.

It carries out the reaction L-cysteine + L-glutamate + ATP = gamma-L-glutamyl-L-cysteine + ADP + phosphate + H(+). Its function is as follows. ATP-dependent carboxylate-amine ligase which exhibits weak glutamate--cysteine ligase activity. This Pseudomonas fluorescens (strain ATCC BAA-477 / NRRL B-23932 / Pf-5) protein is Putative glutamate--cysteine ligase 2.